Here is a 985-residue protein sequence, read N- to C-terminus: Guanine nucleotide exchange protein smcr8b (985 aa).

In terms of domain architecture, uDENN FLCN/SMCR8-type spans 47-225 (ISSAKLKKDF…VKCSSEREPI (179 aa)). The span at 242 to 292 (NEKSSHTDEISPQEKDGCGNSRKVEVKLENENRSHFEHEQYGKQRKDKPDK) shows a compositional bias: basic and acidic residues. Disordered regions lie at residues 242–301 (NEKS…PLAN), 502–528 (QSQV…SPAE), and 639–659 (EESP…EDNN). One can recognise a cDENN FLCN/SMCR8-type domain in the interval 390–895 (RLKTLEELCD…LINLLVEPKS (506 aa)). The segment covering 502–514 (QSQVQHSTLNTPS) has biased composition (polar residues). One can recognise a dDENN FLCN/SMCR8-type domain in the interval 904–962 (FTFAQSVQSKLVTKAFLLTFSHGHPSPSRPQGSSGTECFLSELHTDDKKILRYLSELIK).

Belongs to the SMCR8 family. As to quaternary structure, component of the C9orf72-SMCR8 complex. The C9orf72-SMCR8 complex associates with the ATG1/ULK1 kinase complex.

Its subcellular location is the cytoplasm. The protein localises to the nucleus. In terms of biological role, component of the C9orf72-SMCR8 complex, a complex that has guanine nucleotide exchange factor (GEF) activity and regulates autophagy. In the complex, C9orf72 and SMCR8 probably constitute the catalytic subunits that promote the exchange of GDP to GTP, converting inactive GDP-bound RAB8A and RAB39B into their active GTP-bound form, thereby promoting autophagosome maturation. The C9orf72-SMCR8 complex also acts as a negative regulator of autophagy initiation by interacting with the ATG1/ULK1 kinase complex and inhibiting its protein kinase activity. The polypeptide is Guanine nucleotide exchange protein smcr8b (smcr8b) (Danio rerio (Zebrafish)).